The sequence spans 259 residues: Complement factor D (259 aa).

Positions 1-21 (MADRSGHLAALILLGAAVCVA) are cleaved as a signal peptide. The propeptide at 22–26 (QPRGR) is activation peptide. A Peptidase S1 domain is found at 27 to 254 (ILGGQEAKSH…YVAWIDGVMA (228 aa)). Cysteine 52 and cysteine 68 are disulfide-bonded. Active-site charge relay system residues include histidine 67 and aspartate 115. Cystine bridges form between cysteine 149-cysteine 215, cysteine 180-cysteine 196, and cysteine 205-cysteine 230. The active-site Charge relay system is the serine 209. The interval 224–228 (TSGSR) is self-inhibitor loop.

It belongs to the peptidase S1 family. CFD is activated by the removal of 5 residues at the N-terminus, named activation peptide, by the MASP-3 isoform of MASP1.

Its subcellular location is the secreted. The enzyme catalyses Selective cleavage of Arg-|-Lys bond in complement factor B when in complex with complement subcomponent C3b or with cobra venom factor.. Circulates in plasma in a mature but self-inhibited form. Activated by factor B (CFB), which displaces the self-inhibition loop. Associates with CFB complexed with complement C3b. Functionally, serine protease that initiates the alternative pathway of the complement system, a cascade of proteins that leads to phagocytosis and breakdown of pathogens and signaling that strengthens the adaptive immune system. In contrast to other complement pathways (classical, lectin and GZMK) that are directly activated by pathogens or antigen-antibody complexes, the alternative complement pathway is initiated by the spontaneous hydrolysis of complement C3. The alternative complement pathway acts as an amplification loop that enhances complement activation by mediating the formation of C3 and C5 convertases. Activated CFD cleaves factor B (CFB) when the latter is complexed with complement C3b, activating the C3 convertase of the alternative pathway. The protein is Complement factor D (CFD) of Sus scrofa (Pig).